A 344-amino-acid polypeptide reads, in one-letter code: DNA fragmentation factor subunit beta (344 aa).

The region spanning Gln-7–Gly-83 is the CIDE-N domain.

Heterodimer of DFFA and DFFB. Interacts with H1-1.

It localises to the cytoplasm. The protein localises to the nucleus. Its activity is regulated as follows. Inhibited by DFFA (DFF45). Its function is as follows. Nuclease that induces DNA fragmentation and chromatin condensation during apoptosis. Degrades naked DNA and induces apoptotic morphology. This is DNA fragmentation factor subunit beta (Dffb) from Mus musculus (Mouse).